A 414-amino-acid polypeptide reads, in one-letter code: MASGDTLYIATDGSEMPAEIVELHEIEVETIPVETIETTVVGEEEEEDDDDEDGGGGDHGGGGGGHGHAGHHHHHHHHHHHHPPMIALQPLVTDDPTQVHHHQEVILVQTREEVVGGDDSDGLRAEDGFEDQILIPVPAPAGGDDDYIEQTLVTVAAAGKSGGGASSGGGRVKKGGGKKSGKKSYLGGGAGAAGGGGADPGNKKWEQKQVQIKTLEGEFSVTMWSSDEKKDIDHETVVEEQIIGENSPPDYSEYMTGKKLPPGGIPGIDLSDPKQLAEFARMKPRKIKEDDAPRTIACPHKGCTKMFRDNSAMRKHLHTHGPRVHVCAECGKAFVESSKLKRHQLVHTGEKPFQCTFEGCGKRFSLDFNLRTHVRIHTGDRPYVCPFDGCNKKFAQSTNLKSHILTHAKAKNNQ.

The segment at methionine 1–glycine 170 is interaction with the SMAD1/SMAD4 complex. Residues proline 32 to valine 41 are compositionally biased toward low complexity. Positions proline 32 to proline 83 are disordered. Over residues glycine 42 to glycine 55 the composition is skewed to acidic residues. The segment covering glycine 57 to glycine 67 has biased composition (gly residues). Residues histidine 68–proline 83 show a composition bias toward basic residues. The segment at aspartate 118 to leucine 260 is gly-rich region involved in interaction with HCFC1. At serine 120 the chain carries Phosphoserine. Residues glycine 159–lysine 203 form a disordered region. Residues lysine 160 to glycine 170 show a composition bias toward gly residues. A compositionally biased stretch (basic residues) spans arginine 171–lysine 182. Residues lysine 182 and lysine 183 each participate in a glycyl lysine isopeptide (Lys-Gly) (interchain with G-Cter in SUMO2) cross-link. The span at leucine 186–aspartate 199 shows a compositional bias: gly residues. Residues lysine 208 and lysine 230 each participate in a glycyl lysine isopeptide (Lys-Gly) (interchain with G-Cter in SUMO2) cross-link. Serine 247 is modified (phosphoserine). The segment at glycine 257–lysine 341 is involved in nuclear matrix association. Residues lysine 286 and lysine 288 each participate in a glycyl lysine isopeptide (Lys-Gly) (interchain with G-Cter in SUMO2) cross-link. Positions threonine 295–glutamine 414 are binding to DNA. 3 C2H2-type zinc fingers span residues isoleucine 296–histidine 320, histidine 325–histidine 347, and phenylalanine 353–histidine 377. Zn(2+) is bound by residues cysteine 298, cysteine 303, histidine 316, histidine 320, cysteine 327, cysteine 330, histidine 343, histidine 347, cysteine 355, cysteine 360, histidine 373, and histidine 377. Positions alanine 333–arginine 371 are involved in repression of activated transcription. The interval arginine 371 to serine 397 is involved in masking transactivation domain. Threonine 378 bears the Phosphothreonine mark. A C2H2-type 4 zinc finger spans residues tyrosine 383–histidine 407. 4 residues coordinate Zn(2+): cysteine 385, cysteine 390, histidine 403, and histidine 407. Glycyl lysine isopeptide (Lys-Gly) (interchain with G-Cter in SUMO2) cross-links involve residues lysine 409 and lysine 411.

The protein belongs to the YY transcription factor family. Interacts with YAF2 through the region encompassing the first and second zinc fingers. Component of the chromatin remodeling INO80 complex; specifically part of a complex module associated with the DBINO domain of INO80. Interacts with EED and EZH2; the interactions are indicative for an association with the PRC2/EED-EZH2 complex. Found in a complex with SMAD1 and SMAD4. Interacts with SFMBT2. Found in a complex with YY1, SIN3A and HDAC1. Accessory component of the polycomb repressive deubiquitinase (PR-DUB) complex, at least composed of BAP1, one of ASXL1, ASXL2 or (probably) ASXL3 and one of MBD5 or MBD6; the PR-DUB core associates with a number of accessory proteins, including FOXK1, FOXK2, KDM1B, HCFC1, YY1 and OGT. Interacts (via Gly-rich region) with HCFC1; the interaction is direct. Interacts (via C-terminal zinc-finger domains) with BAP1 (via ULD domain); the interaction is direct and requires HCFC1. In terms of processing, transiently poly-ADP-ribosylated by PARP1 upon DNA damage, with the effect of decreasing affinity of YY1 to its cognate DNA binding sites. Post-translationally, ubiquitinated. Phosphorylation at Ser-120 by CK2 prevents proteolytic cleavage by caspase-7 (CASP7) during apoptosis. In terms of processing, proteolytically cleaved by caspase-7 (CASP7) in response to apoptosis. Phosphorylation at Ser-120 protects against proteolytic cleavage. In terms of tissue distribution, expressed in ovary and, at lower levels, in testis.

It is found in the nucleus. It localises to the nucleus matrix. The protein localises to the cytoplasm. Multifunctional transcription factor that exhibits positive and negative control on a large number of cellular and viral genes by binding to sites overlapping the transcription start site. Binds to the consensus sequence 5'-CCGCCATNTT-3'; some genes have been shown to contain a longer binding motif allowing enhanced binding; the initial CG dinucleotide can be methylated greatly reducing the binding affinity. The effect on transcription regulation is depending upon the context in which it binds and diverse mechanisms of action include direct activation or repression, indirect activation or repression via cofactor recruitment, or activation or repression by disruption of binding sites or conformational DNA changes. Its activity is regulated by transcription factors and cytoplasmic proteins that have been shown to abrogate or completely inhibit YY1-mediated activation or repression. Binds to the upstream conserved region (UCR) (5'-CGCCATTTT-3') of Moloney murine leukemia virus (MuLV). Acts synergistically with the SMAD1 and SMAD4 in bone morphogenetic protein (BMP)-mediated cardiac-specific gene expression. Binds to SMAD binding elements (SBEs) (5'-GTCT/AGAC-3') within BMP response element (BMPRE) of cardiac activating regions. Proposed to recruit the PRC2/EED-EZH2 complex to target genes that are transcriptional repressed. Involved in DNA repair. In vitro, binds to DNA recombination intermediate structures (Holliday junctions). Involved in spermatogenesis and may play a role in meiotic DNA double-strand break repair. Plays a role in regulating enhancer activation. Recruits the PR-DUB complex to specific gene-regulatory regions. Functionally, proposed core component of the chromatin remodeling INO80 complex which is involved in transcriptional regulation, DNA replication and probably DNA repair; proposed to target the INO80 complex to YY1-responsive elements. In Mus musculus (Mouse), this protein is Transcriptional repressor protein YY1 (Yy1).